The following is a 93-amino-acid chain: uncharacterized protein (93 aa).

Residues 1–22 (MNKYWLSGIIFLAYGLASPAFS) form the signal peptide.

This is an uncharacterized protein from Escherichia coli (strain K12).